A 212-amino-acid polypeptide reads, in one-letter code: MKFRSDSSGGDEPRAPAAGDGGGGGDEPAKRQRTDPSSSSSQGEASSSSQPPPQQQQEEQPPEDAGEGEQPRVPDLGEDLVFEVLRRAEARTLAAAACVSRGWRQLAEDERLWEAACVREWANLGFSERQLRAVVLSLGGFRRLHAVYIRPLQWRGAGVPRQQGRRQPPVRLGRDQVQLSLSLFSIGFFQNMPCPKKDKGNDSDKNGGGQCG.

The disordered stretch occupies residues 1 to 74 (MKFRSDSSGG…AGEGEQPRVP (74 aa)). A compositionally biased stretch (low complexity) spans 35-59 (DPSSSSSQGEASSSSQPPPQQQQEE). An F-box domain is found at 70–116 (QPRVPDLGEDLVFEVLRRAEARTLAAAACVSRGWRQLAEDERLWEAA).

Part of some SCF(GID2) complex, which consist of a SKP1 protein, CUL1, GID2 and some RING box protein. Interacts directly with SKP2 and SKP15. Interacts directly with DELLA protein SLR1. May have a higher affinity for phosphorylated SLR1 proteins. As to expression, widely expressed. Preferentially expressed in unopened flowers, shoot apices and elongation stem. Expressed at lower level in the leaf blades, leaf sheaths, roots and rachis.

It localises to the nucleus. Its pathway is protein modification; protein ubiquitination. Essential component of some SCF-type E3 ligase complex that positively regulates the gibberellin signaling pathway. Upon gibberellin treatment, the complex mediates the ubiquitination and subsequent degradation of DELLA protein SLR1, a repressor of the gibberellin pathway, leading to activate the pathway. This Oryza sativa subsp. japonica (Rice) protein is F-box protein GID2 (GID2).